A 237-amino-acid polypeptide reads, in one-letter code: Uridylate kinase (237 aa).

An ATP-binding site is contributed by 10 to 13; that stretch reads KLSG. Gly-51 contributes to the UMP binding site. 2 residues coordinate ATP: Gly-52 and Arg-56. UMP-binding positions include Asp-71 and 133–140; that span reads TGNPCFTT. The ATP site is built by Thr-160, Tyr-166, and Asp-169.

The protein belongs to the UMP kinase family. Homohexamer.

The protein resides in the cytoplasm. The catalysed reaction is UMP + ATP = UDP + ADP. Its pathway is pyrimidine metabolism; CTP biosynthesis via de novo pathway; UDP from UMP (UMPK route): step 1/1. With respect to regulation, inhibited by UTP. In terms of biological role, catalyzes the reversible phosphorylation of UMP to UDP. The chain is Uridylate kinase from Vesicomyosocius okutanii subsp. Calyptogena okutanii (strain HA).